The sequence spans 320 residues: 4-hydroxy-3-methylbut-2-enyl diphosphate reductase (320 aa).

Residue Cys12 participates in [4Fe-4S] cluster binding. The (2E)-4-hydroxy-3-methylbut-2-enyl diphosphate site is built by His41 and His74. Positions 41 and 74 each coordinate dimethylallyl diphosphate. His41 and His74 together coordinate isopentenyl diphosphate. Residue Cys96 participates in [4Fe-4S] cluster binding. Residue His124 coordinates (2E)-4-hydroxy-3-methylbut-2-enyl diphosphate. Residue His124 coordinates dimethylallyl diphosphate. His124 is an isopentenyl diphosphate binding site. Residue Glu126 is the Proton donor of the active site. Thr167 is a binding site for (2E)-4-hydroxy-3-methylbut-2-enyl diphosphate. Cys197 provides a ligand contact to [4Fe-4S] cluster. (2E)-4-hydroxy-3-methylbut-2-enyl diphosphate is bound by residues Ser225, Ser226, Asn227, and Ser269. Dimethylallyl diphosphate is bound by residues Ser225, Ser226, Asn227, and Ser269. Positions 225, 226, 227, and 269 each coordinate isopentenyl diphosphate.

It belongs to the IspH family. The cofactor is [4Fe-4S] cluster.

The catalysed reaction is isopentenyl diphosphate + 2 oxidized [2Fe-2S]-[ferredoxin] + H2O = (2E)-4-hydroxy-3-methylbut-2-enyl diphosphate + 2 reduced [2Fe-2S]-[ferredoxin] + 2 H(+). It carries out the reaction dimethylallyl diphosphate + 2 oxidized [2Fe-2S]-[ferredoxin] + H2O = (2E)-4-hydroxy-3-methylbut-2-enyl diphosphate + 2 reduced [2Fe-2S]-[ferredoxin] + 2 H(+). It functions in the pathway isoprenoid biosynthesis; dimethylallyl diphosphate biosynthesis; dimethylallyl diphosphate from (2E)-4-hydroxy-3-methylbutenyl diphosphate: step 1/1. It participates in isoprenoid biosynthesis; isopentenyl diphosphate biosynthesis via DXP pathway; isopentenyl diphosphate from 1-deoxy-D-xylulose 5-phosphate: step 6/6. Functionally, catalyzes the conversion of 1-hydroxy-2-methyl-2-(E)-butenyl 4-diphosphate (HMBPP) into a mixture of isopentenyl diphosphate (IPP) and dimethylallyl diphosphate (DMAPP). Acts in the terminal step of the DOXP/MEP pathway for isoprenoid precursor biosynthesis. In Francisella tularensis subsp. novicida (strain U112), this protein is 4-hydroxy-3-methylbut-2-enyl diphosphate reductase.